The sequence spans 80 residues: Protein pegasus (80 aa).

The first 22 residues, 1–22, serve as a signal peptide directing secretion; it reads MKLSAVLLAIALLALSLVQCLG. The region spanning 24-80 is the Kazal-like domain; sequence PDPSTKCVMECDTQEYRSICAADDKGSTKTYRNLCVMKTENCLQNANFQKISDKECP. Cystine bridges form between Cys-30–Cys-65, Cys-34–Cys-58, and Cys-43–Cys-79.

In terms of assembly, interacts with wg; the interaction facilitates short-range diffusion of wg. Strongly expressed in the developing fly wing but is excluded from the presumptive wing margin.

The protein resides in the secreted. Its function is as follows. Increases short-range diffusion of the wingless/wg protein, enhancing its signaling and expression of target genes required for wing margin morphogenesis. May act as a serine protease inhibitor since it possess the Kazal serine protease inhibitor signature. This chain is Protein pegasus, found in Drosophila melanogaster (Fruit fly).